The chain runs to 382 residues: MTTNLLDFDLEGLAAFCEQLGQKRFRATQLFRWIHQKGASDFEQMTDLAKSLREKLAVSAHIQGLNVVSRHESADGTIKWLFDVGAGDVIETVFIPETDRGTLCISSQAGCAVGCRFCSTGHQGFSRNLTTGEIISQLWFAEHFLRKHLGRNERVISNVVMMGMGEPLQNYSQLLPALKVMLNDHGYGLSRRRVTVSTSGVVPMIDRLAKDCPVALAVSLHAPQDALRSNLVPLNKKYPIAELLEACTRYQSAAPRDFITFEYCMLDGVNDQPEHARQLVALMKTHAANGLSCKFNLIPFNPFPASGLLRSDMPQVMAFAKILMDAGIITTVRKTRGDDIDAACGQLAGDVQDRTSVDQRMAAQRQGMLGGIKVVVVNGDTA.

Glu-91 serves as the catalytic Proton acceptor. The 243-residue stretch at 97 to 339 (ETDRGTLCIS…TTVRKTRGDD (243 aa)) folds into the Radical SAM core domain. A disulfide bridge links Cys-104 with Cys-344. [4Fe-4S] cluster contacts are provided by Cys-111, Cys-115, and Cys-118. S-adenosyl-L-methionine is bound by residues 165–166 (GE), Ser-197, 219–221 (SLH), and Asn-301. Cys-344 acts as the S-methylcysteine intermediate in catalysis.

This sequence belongs to the radical SAM superfamily. RlmN family. [4Fe-4S] cluster is required as a cofactor.

Its subcellular location is the cytoplasm. The enzyme catalyses adenosine(2503) in 23S rRNA + 2 reduced [2Fe-2S]-[ferredoxin] + 2 S-adenosyl-L-methionine = 2-methyladenosine(2503) in 23S rRNA + 5'-deoxyadenosine + L-methionine + 2 oxidized [2Fe-2S]-[ferredoxin] + S-adenosyl-L-homocysteine. It catalyses the reaction adenosine(37) in tRNA + 2 reduced [2Fe-2S]-[ferredoxin] + 2 S-adenosyl-L-methionine = 2-methyladenosine(37) in tRNA + 5'-deoxyadenosine + L-methionine + 2 oxidized [2Fe-2S]-[ferredoxin] + S-adenosyl-L-homocysteine. Functionally, specifically methylates position 2 of adenine 2503 in 23S rRNA and position 2 of adenine 37 in tRNAs. m2A2503 modification seems to play a crucial role in the proofreading step occurring at the peptidyl transferase center and thus would serve to optimize ribosomal fidelity. The polypeptide is Dual-specificity RNA methyltransferase RlmN (Polaromonas naphthalenivorans (strain CJ2)).